We begin with the raw amino-acid sequence, 51 residues long: MKHHTNLLHYFEKFAIYYNSRPKNLKENSFVKQKKEMVPIEIKYQTLIPYF.

This is an uncharacterized protein from Dictyostelium discoideum (Social amoeba).